The primary structure comprises 200 residues: Anthranilate synthase component 2 (200 aa).

The Glutamine amidotransferase type-1 domain occupies 3-196 (NILLLDNIDS…IHWASLKYIT (194 aa)). 57-59 (GPS) is a binding site for L-glutamine. Cys84 acts as the Nucleophile; for GATase activity in catalysis. Residues Gln88 and 134–135 (SL) contribute to the L-glutamine site. Active-site for GATase activity residues include His170 and Glu172.

Heterotetramer consisting of two non-identical subunits: a beta subunit (TrpG) and a large alpha subunit (TrpE).

It carries out the reaction chorismate + L-glutamine = anthranilate + pyruvate + L-glutamate + H(+). The protein operates within amino-acid biosynthesis; L-tryptophan biosynthesis; L-tryptophan from chorismate: step 1/5. Functionally, part of a heterotetrameric complex that catalyzes the two-step biosynthesis of anthranilate, an intermediate in the biosynthesis of L-tryptophan. In the first step, the glutamine-binding beta subunit (TrpG) of anthranilate synthase (AS) provides the glutamine amidotransferase activity which generates ammonia as a substrate that, along with chorismate, is used in the second step, catalyzed by the large alpha subunit of AS (TrpE) to produce anthranilate. In the absence of TrpG, TrpE can synthesize anthranilate directly from chorismate and high concentrations of ammonia. The chain is Anthranilate synthase component 2 (trpG) from Buchnera aphidicola subsp. Acyrthosiphon pisum (strain APS) (Acyrthosiphon pisum symbiotic bacterium).